The primary structure comprises 564 residues: Dihydroxy-acid dehydratase (564 aa).

Cysteine 53 lines the [2Fe-2S] cluster pocket. Aspartate 85 is a Mg(2+) binding site. Residue cysteine 126 coordinates [2Fe-2S] cluster. The Mg(2+) site is built by aspartate 127 and lysine 128. Residue lysine 128 is modified to N6-carboxylysine. Residue cysteine 203 coordinates [2Fe-2S] cluster. Mg(2+) is bound at residue glutamate 454. The active-site Proton acceptor is the serine 480.

It belongs to the IlvD/Edd family. Homodimer. It depends on [2Fe-2S] cluster as a cofactor. Requires Mg(2+) as cofactor.

It carries out the reaction (2R)-2,3-dihydroxy-3-methylbutanoate = 3-methyl-2-oxobutanoate + H2O. The catalysed reaction is (2R,3R)-2,3-dihydroxy-3-methylpentanoate = (S)-3-methyl-2-oxopentanoate + H2O. It functions in the pathway amino-acid biosynthesis; L-isoleucine biosynthesis; L-isoleucine from 2-oxobutanoate: step 3/4. Its pathway is amino-acid biosynthesis; L-valine biosynthesis; L-valine from pyruvate: step 3/4. In terms of biological role, functions in the biosynthesis of branched-chain amino acids. Catalyzes the dehydration of (2R,3R)-2,3-dihydroxy-3-methylpentanoate (2,3-dihydroxy-3-methylvalerate) into 2-oxo-3-methylpentanoate (2-oxo-3-methylvalerate) and of (2R)-2,3-dihydroxy-3-methylbutanoate (2,3-dihydroxyisovalerate) into 2-oxo-3-methylbutanoate (2-oxoisovalerate), the penultimate precursor to L-isoleucine and L-valine, respectively. This chain is Dihydroxy-acid dehydratase, found in Mycobacterium ulcerans (strain Agy99).